The primary structure comprises 346 residues: Fusaric acid resistance protein FusC (346 aa).

The next 4 membrane-spanning stretches (helical) occupy residues 10–30 (VIIGIVSAGVVSALVFPRYTG), 248–268 (VILALGWFWIETAWPSGVMLV), 291–311 (MGMGTALAVCTGFLLTFGIYP), and 315–335 (GFVLLCAALAPLLAIGIYMSL).

Belongs to the aromatic acid exporter ArAE (TC 2.A.85) family.

It localises to the cell membrane. Involved in the resistance (detoxification) of the fungal toxin fusaric acid. This Burkholderia cepacia (Pseudomonas cepacia) protein is Fusaric acid resistance protein FusC (fusC).